A 152-amino-acid chain; its full sequence is Arginine repressor (152 aa).

It belongs to the ArgR family.

It localises to the cytoplasm. The protein operates within amino-acid biosynthesis; L-arginine biosynthesis [regulation]. Functionally, regulates arginine biosynthesis genes. This is Arginine repressor from Thermotoga sp. (strain RQ2).